An 890-amino-acid polypeptide reads, in one-letter code: MTQYTPMIQQYLKVKADYQDAFLFFRLGDFYEMFFEDAVKAAHELEITLTSRDGGSSERIPMCGVPYHAAKNYIEQLVEKGYKVAVCEQVEDPKTAKGVVRREVVQLITPGTMMEGRTIDEKENNFLAALTHFEDGSYALACNDLTTGQNTVTLLTGSVEDILLEVYATGSKEIVVDSSFSKDELNKLTETLKMTISYEDATAIPEGLEHLVKNVSQAKLIKAVGRLFNYVIRTQKRSLDHLQPVEIYYTNQFMKIDVHSKRNLELTETLRTKEKTGSLLWLLDKTKTAMGGRMLKQWMERPLIQKERIEERLEMVETFVNDYFLREDLKEKLKEVYDLERLAGKVAFGNVNARDLLQLRRSLLQVPAILEAISLLDNAYAARLIQGADPCESLTELLGRSIQENPPLSIKDGDIIKDGYNDKLDQYRYVSKNGKTWIAELEKRERDITGIKSLKIGYNRIFGYYIEVTKANLGALPEGRYERKQTLANAERFITDELKEKETLILEAEEKIVQLEYDLFTALREEVKVFIPKLQHLAKVISELDVLQSFATVSEEEQFVKPVLTTKREIFIKDGRHPVVEKVLNGKLYVPNDCIMPENMDVFLITGPNMSGKSTYMRQLALVTVMSQIGCFVPATEAVLPVFDQIFTRIGAADDLISGQSTFMVEMLEAKNAIANASERSLILFDEIGRGTSTYDGMALAQAIIEHIHDQIGAKTLFSTHYHELTVLEDSLDQLKNVHVSAIEENGKVVFLHKIQDGAADKSYGIHVAQLAELPDSLIARAKEVLAQLEGQEEIVIPKRVEVKEQEVIPEPVVVKEEPVAIEETKVDNEEESQLSFFGTEQSSKKQDKPVLDAKETAVLTQIKKIDLLDMTPLEAMNELYRLQKKLKKG.

607–614 (GPNMSGKS) is a binding site for ATP. Positions 832–851 (ESQLSFFGTEQSSKKQDKPV) are disordered.

It belongs to the DNA mismatch repair MutS family.

This protein is involved in the repair of mismatches in DNA. It is possible that it carries out the mismatch recognition step. This protein has a weak ATPase activity. This Bacillus cereus (strain 03BB102) protein is DNA mismatch repair protein MutS.